Here is a 152-residue protein sequence, read N- to C-terminus: Lipoprotein signal peptidase (152 aa).

A run of 2 helical transmembrane segments spans residues Asn-55 to Met-75 and Leu-85 to Phe-105. Catalysis depends on residues Asp-111 and Asp-129. A helical transmembrane segment spans residues Val-124–Leu-144.

The protein belongs to the peptidase A8 family.

Its subcellular location is the cell membrane. The catalysed reaction is Release of signal peptides from bacterial membrane prolipoproteins. Hydrolyzes -Xaa-Yaa-Zaa-|-(S,diacylglyceryl)Cys-, in which Xaa is hydrophobic (preferably Leu), and Yaa (Ala or Ser) and Zaa (Gly or Ala) have small, neutral side chains.. The protein operates within protein modification; lipoprotein biosynthesis (signal peptide cleavage). This protein specifically catalyzes the removal of signal peptides from prolipoproteins. This is Lipoprotein signal peptidase from Bacillus cereus (strain AH187).